Reading from the N-terminus, the 299-residue chain is Foldase protein PrsA (299 aa).

The N-terminal stretch at 1–19 (MKKWTIAASLSIGVLALSA) is a signal peptide. Residue Cys20 is the site of N-palmitoyl cysteine attachment. Cys20 carries S-diacylglycerol cysteine lipidation. The 91-residue stretch at 137–227 (NTEIQAQHIL…HGTHIIKVND (91 aa)) folds into the PpiC domain.

Belongs to the PrsA family.

It is found in the cell membrane. The catalysed reaction is [protein]-peptidylproline (omega=180) = [protein]-peptidylproline (omega=0). Functionally, plays a major role in protein secretion by helping the post-translocational extracellular folding of several secreted proteins. In Oceanobacillus iheyensis (strain DSM 14371 / CIP 107618 / JCM 11309 / KCTC 3954 / HTE831), this protein is Foldase protein PrsA.